The following is a 169-amino-acid chain: NADH-quinone oxidoreductase subunit I (169 aa).

2 consecutive 4Fe-4S ferredoxin-type domains span residues 60-90 (LRRY…IEAE) and 100-129 (TRYD…EGPN). [4Fe-4S] cluster contacts are provided by Cys-70, Cys-73, Cys-76, Cys-80, Cys-109, Cys-112, Cys-115, and Cys-119.

This sequence belongs to the complex I 23 kDa subunit family. In terms of assembly, NDH-1 is composed of 14 different subunits. Subunits NuoA, H, J, K, L, M, N constitute the membrane sector of the complex. It depends on [4Fe-4S] cluster as a cofactor.

Its subcellular location is the cell membrane. The enzyme catalyses a quinone + NADH + 5 H(+)(in) = a quinol + NAD(+) + 4 H(+)(out). Functionally, NDH-1 shuttles electrons from NADH, via FMN and iron-sulfur (Fe-S) centers, to quinones in the respiratory chain. The immediate electron acceptor for the enzyme in this species is believed to be ubiquinone. Couples the redox reaction to proton translocation (for every two electrons transferred, four hydrogen ions are translocated across the cytoplasmic membrane), and thus conserves the redox energy in a proton gradient. The sequence is that of NADH-quinone oxidoreductase subunit I from Wolbachia pipientis wMel.